A 271-amino-acid chain; its full sequence is uncharacterized protein (271 aa).

Residues 77–205 (IIGVYFGDAN…SKELLKKLDV (129 aa)) form the DOD-type homing endonuclease domain.

This is an uncharacterized protein from Methanocaldococcus jannaschii (strain ATCC 43067 / DSM 2661 / JAL-1 / JCM 10045 / NBRC 100440) (Methanococcus jannaschii).